Consider the following 85-residue polypeptide: Small ribosomal subunit protein bS16c (85 aa).

The protein belongs to the bacterial ribosomal protein bS16 family.

The protein localises to the plastid. Its subcellular location is the chloroplast. This Cucumis sativus (Cucumber) protein is Small ribosomal subunit protein bS16c.